A 297-amino-acid chain; its full sequence is Phosphatidylinositol N-acetylglucosaminyltransferase subunit C (297 aa).

Helical transmembrane passes span 67–87 (VFVVIWWYMDEGLLAPQWLFG), 88–108 (TGLASSLIGYVLFDFIDGGEG), 153–173 (AVFMLLGHLIFFDYGANAAIV), and 239–259 (ALGGLLSISAVGAILFALLLI).

This sequence belongs to the PIGC family. Component of the glycosylphosphatidylinositol-N-acetylglucosaminyltransferase (GPI-GnT) complex composed at least by PIGA, PIGC, PIGH, PIGP, PIGQ, PIGY and DPM2. Interacts with PIGQ. Interacts with the heterodimer PIGA:PIGH.

The protein resides in the endoplasmic reticulum membrane. It participates in glycolipid biosynthesis; glycosylphosphatidylinositol-anchor biosynthesis. Functionally, part of the glycosylphosphatidylinositol-N-acetylglucosaminyltransferase (GPI-GnT) complex that catalyzes the transfer of N-acetylglucosamine from UDP-N-acetylglucosamine to phosphatidylinositol and participates in the first step of GPI biosynthesis. This chain is Phosphatidylinositol N-acetylglucosaminyltransferase subunit C, found in Bos taurus (Bovine).